Here is a 431-residue protein sequence, read N- to C-terminus: Asparagine--tRNA ligase 1 (431 aa).

The protein belongs to the class-II aminoacyl-tRNA synthetase family. Homodimer.

The protein localises to the cytoplasm. The catalysed reaction is tRNA(Asn) + L-asparagine + ATP = L-asparaginyl-tRNA(Asn) + AMP + diphosphate + H(+). The protein is Asparagine--tRNA ligase 1 (asnS1) of Lactiplantibacillus plantarum (strain ATCC BAA-793 / NCIMB 8826 / WCFS1) (Lactobacillus plantarum).